Here is a 358-residue protein sequence, read N- to C-terminus: Naringenin,2-oxoglutarate 3-dioxygenase (358 aa).

The 105-residue stretch at 190–294 (CVDMDQKIVV…RLSIATFQNP (105 aa)) folds into the Fe2OG dioxygenase domain. Residues histidine 217, aspartate 219, and histidine 275 each coordinate Fe cation. Arginine 285 is a 2-oxoglutarate binding site.

It belongs to the iron/ascorbate-dependent oxidoreductase family. As to quaternary structure, interacts with Dihydroflavonol-4-reductase (TT3), chalcone synthase (TT4) and chalcone isomerase (TT5) to form a flavonoid enzyme complex. The cofactor is Fe(2+). It depends on L-ascorbate as a cofactor.

The catalysed reaction is a (2S)-flavan-4-one + 2-oxoglutarate + O2 = a (2R,3R)-dihydroflavonol + succinate + CO2. The protein operates within secondary metabolite biosynthesis; flavonoid biosynthesis. Its function is as follows. Catalyzes the 3-beta-hydroxylation of 2S-flavanones to 2R,3R-dihydroflavonols which are intermediates in the biosynthesis of flavonols, anthocyanidins, catechins and proanthocyanidins in plants. The protein is Naringenin,2-oxoglutarate 3-dioxygenase (F3H) of Arabidopsis thaliana (Mouse-ear cress).